Consider the following 530-residue polypeptide: Formate--tetrahydrofolate ligase (530 aa).

46–53 is a binding site for ATP; sequence TPEGEGKT.

The protein belongs to the formate--tetrahydrofolate ligase family.

It carries out the reaction (6S)-5,6,7,8-tetrahydrofolate + formate + ATP = (6R)-10-formyltetrahydrofolate + ADP + phosphate. It participates in one-carbon metabolism; tetrahydrofolate interconversion. This chain is Formate--tetrahydrofolate ligase, found in Malacoplasma penetrans (strain HF-2) (Mycoplasma penetrans).